Reading from the N-terminus, the 370-residue chain is Platelet-derived growth factor D (370 aa).

An N-terminal signal peptide occupies residues 1 to 23 (MQRLVLVSILLCANFSCYPDTFA). The CUB domain maps to 52 to 170 (REENIQVTSN…PGFKIYYSFV (119 aa)). Cysteines 109 and 131 form a disulfide. A glycan (N-linked (GlcNAc...) asparagine) is linked at N276. 2 disulfides stabilise this stretch: C302-C360 and C306-C362.

This sequence belongs to the PDGF/VEGF growth factor family. In terms of assembly, homodimer; disulfide-linked. Interacts with PDGFRB homodimers, and with heterodimers formed by PDGFRA and PDGFRB. In terms of processing, activated by proteolytic cleavage. Proteolytic removal of the N-terminal CUB domain releasing the core domain is necessary for unmasking the receptor-binding epitopes of the core domain. Cleavage after Arg-247 or Arg-249 by urokinase plasminogen activator gives rise to the active form. In terms of tissue distribution, expressed at high levels in developing heart, lung, kidney and some muscle derivatives. Moderately expressed in liver, brain and testis. In the kidney, localized to glomerular mesangial cells and vascular smooth muscle cells. Up-regulated in areas of renal fibrosis. In mice with unilateral ureteral obstruction, expressed in interstitial cells at day 4, with an increased to maximal expression at day 14.

The protein resides in the secreted. Its function is as follows. Growth factor that plays an essential role in the regulation of embryonic development, cell proliferation, cell migration, survival and chemotaxis. Potent mitogen for cells of mesenchymal origin. Plays an important role in wound healing. Has oncogenic potential and can induce tumor formation. Induces macrophage recruitment, increased interstitial pressure, and blood vessel maturation during angiogenesis. Can initiate events that lead to a mesangial proliferative glomerulonephritis, including influx of monocytes and macrophages and production of extracellular matrix. The polypeptide is Platelet-derived growth factor D (Pdgfd) (Mus musculus (Mouse)).